Consider the following 637-residue polypeptide: 1-deoxy-D-xylulose-5-phosphate synthase (637 aa).

Thiamine diphosphate contacts are provided by residues histidine 73 and 113–115; that span reads SHA. Aspartate 144 contributes to the Mg(2+) binding site. Residues 145 to 146, asparagine 174, tyrosine 285, and glutamate 366 contribute to the thiamine diphosphate site; that span reads GA. Asparagine 174 is a Mg(2+) binding site.

It belongs to the transketolase family. DXPS subfamily. In terms of assembly, homodimer. Requires Mg(2+) as cofactor. It depends on thiamine diphosphate as a cofactor.

The catalysed reaction is D-glyceraldehyde 3-phosphate + pyruvate + H(+) = 1-deoxy-D-xylulose 5-phosphate + CO2. It participates in metabolic intermediate biosynthesis; 1-deoxy-D-xylulose 5-phosphate biosynthesis; 1-deoxy-D-xylulose 5-phosphate from D-glyceraldehyde 3-phosphate and pyruvate: step 1/1. Catalyzes the acyloin condensation reaction between C atoms 2 and 3 of pyruvate and glyceraldehyde 3-phosphate to yield 1-deoxy-D-xylulose-5-phosphate (DXP). This chain is 1-deoxy-D-xylulose-5-phosphate synthase, found in Streptomyces griseus subsp. griseus (strain JCM 4626 / CBS 651.72 / NBRC 13350 / KCC S-0626 / ISP 5235).